Here is a 185-residue protein sequence, read N- to C-terminus: Isopentenyl-diphosphate Delta-isomerase (185 aa).

Residues H27 and H34 each contribute to the Mn(2+) site. Residues 32–168 (PLHLAFSCHL…PWAFSPWLTL (137 aa)) form the Nudix hydrolase domain. Residue C69 is part of the active site. Residue C69 coordinates Mg(2+). A Mn(2+)-binding site is contributed by H71. E89 is a binding site for Mg(2+). Residues E118 and E120 each contribute to the Mn(2+) site. The active site involves E120.

It belongs to the IPP isomerase type 1 family. Mg(2+) is required as a cofactor. Mn(2+) serves as cofactor.

The protein resides in the cytoplasm. The catalysed reaction is isopentenyl diphosphate = dimethylallyl diphosphate. Its pathway is isoprenoid biosynthesis; dimethylallyl diphosphate biosynthesis; dimethylallyl diphosphate from isopentenyl diphosphate: step 1/1. Functionally, catalyzes the 1,3-allylic rearrangement of the homoallylic substrate isopentenyl (IPP) to its highly electrophilic allylic isomer, dimethylallyl diphosphate (DMAPP). This Leifsonia xyli subsp. xyli (strain CTCB07) protein is Isopentenyl-diphosphate Delta-isomerase.